We begin with the raw amino-acid sequence, 513 residues long: ATP synthase subunit alpha (513 aa).

169-176 is a binding site for ATP; it reads GDRQTGKT.

The protein belongs to the ATPase alpha/beta chains family. F-type ATPases have 2 components, CF(1) - the catalytic core - and CF(0) - the membrane proton channel. CF(1) has five subunits: alpha(3), beta(3), gamma(1), delta(1), epsilon(1). CF(0) has three main subunits: a(1), b(2) and c(9-12). The alpha and beta chains form an alternating ring which encloses part of the gamma chain. CF(1) is attached to CF(0) by a central stalk formed by the gamma and epsilon chains, while a peripheral stalk is formed by the delta and b chains.

The protein localises to the cell inner membrane. The catalysed reaction is ATP + H2O + 4 H(+)(in) = ADP + phosphate + 5 H(+)(out). Produces ATP from ADP in the presence of a proton gradient across the membrane. The alpha chain is a regulatory subunit. This chain is ATP synthase subunit alpha, found in Citrobacter koseri (strain ATCC BAA-895 / CDC 4225-83 / SGSC4696).